Consider the following 494-residue polypeptide: Psoralen synthase (494 aa).

A helical membrane pass occupies residues 12 to 29 (YFFSLFLVTIFLYKWLTL). Position 436 (Cys-436) interacts with heme.

The protein belongs to the cytochrome P450 family.

Its subcellular location is the endoplasmic reticulum membrane. It is found in the microsome membrane. The catalysed reaction is (7S)-marmesin + reduced [NADPH--hemoprotein reductase] + O2 = psoralen + acetone + oxidized [NADPH--hemoprotein reductase] + 2 H2O + H(+). Its activity is regulated as follows. Inhibited by columbianetin. Functionally, involved in linear furanocumarin (psoralen) biosynthesis. Converts marmesin to psoralen. In Ammi majus (Bishop's weed), this protein is Psoralen synthase (CYP71AJ1).